Reading from the N-terminus, the 178-residue chain is Adenine phosphoribosyltransferase (178 aa).

This sequence belongs to the purine/pyrimidine phosphoribosyltransferase family. As to quaternary structure, homodimer.

Its subcellular location is the cytoplasm. It carries out the reaction AMP + diphosphate = 5-phospho-alpha-D-ribose 1-diphosphate + adenine. The protein operates within purine metabolism; AMP biosynthesis via salvage pathway; AMP from adenine: step 1/1. Its function is as follows. Catalyzes a salvage reaction resulting in the formation of AMP, that is energically less costly than de novo synthesis. This is Adenine phosphoribosyltransferase from Cereibacter sphaeroides (strain ATCC 17023 / DSM 158 / JCM 6121 / CCUG 31486 / LMG 2827 / NBRC 12203 / NCIMB 8253 / ATH 2.4.1.) (Rhodobacter sphaeroides).